Here is a 350-residue protein sequence, read N- to C-terminus: Phenylalanine--tRNA ligase alpha subunit (350 aa).

E257 provides a ligand contact to Mg(2+).

This sequence belongs to the class-II aminoacyl-tRNA synthetase family. Phe-tRNA synthetase alpha subunit type 1 subfamily. As to quaternary structure, tetramer of two alpha and two beta subunits. The cofactor is Mg(2+).

It localises to the cytoplasm. The catalysed reaction is tRNA(Phe) + L-phenylalanine + ATP = L-phenylalanyl-tRNA(Phe) + AMP + diphosphate + H(+). This chain is Phenylalanine--tRNA ligase alpha subunit, found in Listeria welshimeri serovar 6b (strain ATCC 35897 / DSM 20650 / CCUG 15529 / CIP 8149 / NCTC 11857 / SLCC 5334 / V8).